A 404-amino-acid polypeptide reads, in one-letter code: Formate-dependent phosphoribosylglycinamide formyltransferase (404 aa).

N(1)-(5-phospho-beta-D-ribosyl)glycinamide-binding positions include 25 to 26 and E85; that span reads EL. ATP-binding positions include R118, K159, 164 to 169, 199 to 202, and E207; these read SSGKGQ and EGFI. Residues 123 to 318 enclose the ATP-grasp domain; that stretch reads RLAAEELGLP…EFELHARAIL (196 aa). Mg(2+) is bound by residues E277 and E289. Residues D296, K365, and 372-373 each bind N(1)-(5-phospho-beta-D-ribosyl)glycinamide; that span reads RR.

This sequence belongs to the PurK/PurT family. In terms of assembly, homodimer.

It carries out the reaction N(1)-(5-phospho-beta-D-ribosyl)glycinamide + formate + ATP = N(2)-formyl-N(1)-(5-phospho-beta-D-ribosyl)glycinamide + ADP + phosphate + H(+). The protein operates within purine metabolism; IMP biosynthesis via de novo pathway; N(2)-formyl-N(1)-(5-phospho-D-ribosyl)glycinamide from N(1)-(5-phospho-D-ribosyl)glycinamide (formate route): step 1/1. Functionally, involved in the de novo purine biosynthesis. Catalyzes the transfer of formate to 5-phospho-ribosyl-glycinamide (GAR), producing 5-phospho-ribosyl-N-formylglycinamide (FGAR). Formate is provided by PurU via hydrolysis of 10-formyl-tetrahydrofolate. The polypeptide is Formate-dependent phosphoribosylglycinamide formyltransferase (Burkholderia lata (strain ATCC 17760 / DSM 23089 / LMG 22485 / NCIMB 9086 / R18194 / 383)).